A 246-amino-acid polypeptide reads, in one-letter code: Proteolipid protein DM gamma (246 aa).

4 helical membrane-spanning segments follow: residues 19 to 35 (LLATILCFSGVALFCGC), 71 to 87 (VIYGVASFSFLYGIILL), 118 to 134 (VFLTYLLGIAWLGVFGF), and 206 to 222 (FIVACAGAGATVIALLI).

It belongs to the myelin proteolipid protein family. In terms of tissue distribution, highly expressed in white matter in myelinating shark brain.

The protein resides in the membrane. The polypeptide is Proteolipid protein DM gamma (Squalus acanthias (Spiny dogfish)).